We begin with the raw amino-acid sequence, 416 residues long: Subtilisin-like protease 12 (416 aa).

Positions 1 to 19 (MSILKMMLIYFAIFWVVNA) are cleaved as a signal peptide. Residues 20 to 116 (AQLLDIDSQG…VEPNKEMQVA (97 aa)) constitute a propeptide that is removed on maturation. One can recognise an Inhibitor I9 domain in the interval 35-115 (YIVVMKDRVS…FVEPNKEMQV (81 aa)). N-linked (GlcNAc...) asparagine glycans are attached at residues asparagine 123, asparagine 136, and asparagine 150. The region spanning 125-416 (TWGLSRISHK…NKLLYNGSGA (292 aa)) is the Peptidase S8 domain. Active-site charge relay system residues include aspartate 157 and histidine 188. Asparagine 249, asparagine 305, asparagine 334, and asparagine 353 each carry an N-linked (GlcNAc...) asparagine glycan. The active-site Charge relay system is serine 362. Asparagine 404 and asparagine 412 each carry an N-linked (GlcNAc...) asparagine glycan.

It belongs to the peptidase S8 family.

It localises to the secreted. In terms of biological role, secreted subtilisin-like serine protease with keratinolytic activity that contributes to pathogenicity. The protein is Subtilisin-like protease 12 (SUB12) of Arthroderma benhamiae (strain ATCC MYA-4681 / CBS 112371) (Trichophyton mentagrophytes).